We begin with the raw amino-acid sequence, 156 residues long: MRSSAKQEELVKAFKALLKEEKFSSQGEIVAALQEQGFDNINQSKVSRMLTKFGAVRTRNAKMEMVYCLPAELGVPTTSSPLKNLVLDIDYNDAVVVIHTSPGAAQLIARLLDSLGKAEGILGTIAGDDTIFTTPANGFTVKDLYEAILELFDQEL.

The protein belongs to the ArgR family.

The protein resides in the cytoplasm. The protein operates within amino-acid biosynthesis; L-arginine biosynthesis [regulation]. Functionally, regulates arginine biosynthesis genes. The protein is Arginine repressor of Shigella boydii serotype 18 (strain CDC 3083-94 / BS512).